Here is a 320-residue protein sequence, read N- to C-terminus: 4-diphosphocytidyl-2-C-methyl-D-erythritol kinase (320 aa).

Lysine 20 is a catalytic residue. 112-122 (PVAGGMGGGSA) is an ATP binding site. Residue aspartate 154 is part of the active site.

This sequence belongs to the GHMP kinase family. IspE subfamily.

The enzyme catalyses 4-CDP-2-C-methyl-D-erythritol + ATP = 4-CDP-2-C-methyl-D-erythritol 2-phosphate + ADP + H(+). Its pathway is isoprenoid biosynthesis; isopentenyl diphosphate biosynthesis via DXP pathway; isopentenyl diphosphate from 1-deoxy-D-xylulose 5-phosphate: step 3/6. Its function is as follows. Catalyzes the phosphorylation of the position 2 hydroxy group of 4-diphosphocytidyl-2C-methyl-D-erythritol. This Arthrobacter sp. (strain FB24) protein is 4-diphosphocytidyl-2-C-methyl-D-erythritol kinase.